A 434-amino-acid polypeptide reads, in one-letter code: Beta-glucuronosyltransferase GlcAT14B (434 aa).

At 1–21 (MKKLKSYYMQVRNQQQSLDRK) the chain is on the cytoplasmic side. A signal-anchor for type II membrane protein transmembrane segment spans residues 22 to 42 (WILPLAIGSICSLFLLLLTNL). Topologically, residues 43–434 (ASSSGQTRLI…TENFRPRQCR (392 aa)) are lumenal. Asparagine 138, asparagine 187, asparagine 316, and asparagine 392 each carry an N-linked (GlcNAc...) asparagine glycan.

It belongs to the glycosyltransferase 14 family.

The protein localises to the golgi apparatus membrane. Beta-glucuronosyltransferase involved in the biosynthesis of type II arabinogalactan (AG). Modifies both the beta-1,6-linked galactan and beta-1,3-linked galactan present in type II AG. The chain is Beta-glucuronosyltransferase GlcAT14B from Arabidopsis thaliana (Mouse-ear cress).